We begin with the raw amino-acid sequence, 150 residues long: 3-hydroxyacyl-[acyl-carrier-protein] dehydratase FabZ (150 aa).

The active site involves H51.

It belongs to the thioester dehydratase family. FabZ subfamily.

Its subcellular location is the cytoplasm. The enzyme catalyses a (3R)-hydroxyacyl-[ACP] = a (2E)-enoyl-[ACP] + H2O. Functionally, involved in unsaturated fatty acids biosynthesis. Catalyzes the dehydration of short chain beta-hydroxyacyl-ACPs and long chain saturated and unsaturated beta-hydroxyacyl-ACPs. The polypeptide is 3-hydroxyacyl-[acyl-carrier-protein] dehydratase FabZ (Geobacter metallireducens (strain ATCC 53774 / DSM 7210 / GS-15)).